The following is a 317-amino-acid chain: Metaxin-1 (317 aa).

Glycyl lysine isopeptide (Lys-Gly) (interchain with G-Cter in ubiquitin) cross-links involve residues K38, K41, and K78. Residues 164-184 (EELEKELYQEAQECLTLLSQR) form a helical membrane-spanning segment.

The protein belongs to the metaxin family. Interacts with MTX2/metaxin-2. Associates with the mitochondrial contact site and cristae organizing system (MICOS) complex, composed of at least MICOS10/MIC10, CHCHD3/MIC19, CHCHD6/MIC25, APOOL/MIC27, IMMT/MIC60, APOO/MIC23/MIC26 and QIL1/MIC13. This complex was also known under the names MINOS or MitOS complex. The MICOS complex associates with mitochondrial outer membrane proteins SAMM50, MTX1 and MTX2 (together described as components of the mitochondrial outer membrane sorting assembly machinery (SAM) complex) and DNAJC11, mitochondrial inner membrane protein TMEM11 and with HSPA9. The MICOS and SAM complexes together with DNAJC11 are part of a large protein complex spanning both membranes termed the mitochondrial intermembrane space bridging (MIB) complex. Interacts with ARMC1. Ubiquitinated by PRKN during mitophagy, leading to its degradation and enhancement of mitophagy. Deubiquitinated by USP30.

The protein localises to the mitochondrion outer membrane. In terms of biological role, involved in transport of proteins into the mitochondrion. Essential for embryonic development. In Bos taurus (Bovine), this protein is Metaxin-1 (MTX1).